The following is a 132-amino-acid chain: Small ribosomal subunit protein uS8 (132 aa).

This sequence belongs to the universal ribosomal protein uS8 family. In terms of assembly, part of the 30S ribosomal subunit. Contacts proteins S5 and S12.

Its function is as follows. One of the primary rRNA binding proteins, it binds directly to 16S rRNA central domain where it helps coordinate assembly of the platform of the 30S subunit. The polypeptide is Small ribosomal subunit protein uS8 (Mycobacterium sp. (strain KMS)).